The primary structure comprises 203 residues: Holliday junction branch migration complex subunit RuvA (203 aa).

A domain I region spans residues 1–64 (MIGRLRGYIL…EDAQLLYGFN (64 aa)). Residues 65–142 (DKQERALFRE…KGLNGDLFNN (78 aa)) are domain II. The interval 143 to 154 (SSEITLPTAAQA) is flexible linker. The interval 155–203 (AELDAEAEAASALVALGYKPQEASRMVSKIAKPGADCETLIRDALRAAL) is domain III.

Belongs to the RuvA family. In terms of assembly, homotetramer. Forms an RuvA(8)-RuvB(12)-Holliday junction (HJ) complex. HJ DNA is sandwiched between 2 RuvA tetramers; dsDNA enters through RuvA and exits via RuvB. An RuvB hexamer assembles on each DNA strand where it exits the tetramer. Each RuvB hexamer is contacted by two RuvA subunits (via domain III) on 2 adjacent RuvB subunits; this complex drives branch migration. In the full resolvosome a probable DNA-RuvA(4)-RuvB(12)-RuvC(2) complex forms which resolves the HJ.

The protein localises to the cytoplasm. The RuvA-RuvB-RuvC complex processes Holliday junction (HJ) DNA during genetic recombination and DNA repair, while the RuvA-RuvB complex plays an important role in the rescue of blocked DNA replication forks via replication fork reversal (RFR). RuvA specifically binds to HJ cruciform DNA, conferring on it an open structure. The RuvB hexamer acts as an ATP-dependent pump, pulling dsDNA into and through the RuvAB complex. HJ branch migration allows RuvC to scan DNA until it finds its consensus sequence, where it cleaves and resolves the cruciform DNA. In Serratia proteamaculans (strain 568), this protein is Holliday junction branch migration complex subunit RuvA.